Here is a 100-residue protein sequence, read N- to C-terminus: Urease subunit gamma (100 aa).

It belongs to the urease gamma subunit family. In terms of assembly, heterotrimer of UreA (gamma), UreB (beta) and UreC (alpha) subunits. Three heterotrimers associate to form the active enzyme.

It is found in the cytoplasm. The catalysed reaction is urea + 2 H2O + H(+) = hydrogencarbonate + 2 NH4(+). The protein operates within nitrogen metabolism; urea degradation; CO(2) and NH(3) from urea (urease route): step 1/1. The sequence is that of Urease subunit gamma from Cupriavidus necator (strain ATCC 17699 / DSM 428 / KCTC 22496 / NCIMB 10442 / H16 / Stanier 337) (Ralstonia eutropha).